Here is a 159-residue protein sequence, read N- to C-terminus: NADH-quinone oxidoreductase subunit I (159 aa).

4Fe-4S ferredoxin-type domains lie at 51–80 (RRYENGEERCIACKLCEAICPAQAIVIESD) and 90–119 (TRYDIDMTKCIYCGLCQEACPVDAIVEGPN). [4Fe-4S] cluster contacts are provided by cysteine 60, cysteine 63, cysteine 66, cysteine 70, cysteine 99, cysteine 102, cysteine 105, and cysteine 109.

The protein belongs to the complex I 23 kDa subunit family. In terms of assembly, NDH-1 is composed of 14 different subunits. Subunits NuoA, H, J, K, L, M, N constitute the membrane sector of the complex. It depends on [4Fe-4S] cluster as a cofactor.

The protein resides in the cell inner membrane. It carries out the reaction a quinone + NADH + 5 H(+)(in) = a quinol + NAD(+) + 4 H(+)(out). Its function is as follows. NDH-1 shuttles electrons from NADH, via FMN and iron-sulfur (Fe-S) centers, to quinones in the respiratory chain. The immediate electron acceptor for the enzyme in this species is believed to be ubiquinone. Couples the redox reaction to proton translocation (for every two electrons transferred, four hydrogen ions are translocated across the cytoplasmic membrane), and thus conserves the redox energy in a proton gradient. The protein is NADH-quinone oxidoreductase subunit I of Rickettsia prowazekii (strain Madrid E).